We begin with the raw amino-acid sequence, 25 residues long: Neuromedin-U-25 (25 aa).

Asn-25 bears the Asparagine amide mark.

Belongs to the NmU family.

The protein localises to the secreted. Stimulates uterine smooth muscle contraction and causes selective vasoconstriction. This chain is Neuromedin-U-25 (NMU), found in Gallus gallus (Chicken).